Reading from the N-terminus, the 415-residue chain is MEPLRVLELYSGIGGMHHALRESHIPAHVVAAIDVNTVANEVYKHNFPHTHLLSKTIEGISLEDFDKLSFNMILMSPPCQPFTRIGLQGDMTDPRTTSFLYILDILPRLQKLPKYILLENVKGFEVSSTRGLLIQTIEACGFQYQEFLLSPSSLGIPNSRLRYFLIAKLQSEPFPFQAPGQILMEFPKIVTVEPQKYAVVEESQPRVQRTGPRICAESSSTQSSGKDTILFKLETVEERDRKHQQDSDLSVQMLKDFLEDGDTDEYLLPPKLLLRYALLLDIVKPTSRRSMCFTKGYGSYIEGTGSVLQAAEDAQIENIYKSLPDLPPEEKIAKLSMLKLRYFTPKEIANLQGFPPEFGFPEKTTVKQRYRLLGNSLNVHVVAKLLTVLCEGFGNASESCHKMPLILDSNSKILS.

Residues 4–396 (LRVLELYSGI…TVLCEGFGNA (393 aa)) form the SAM-dependent MTase C5-type domain. Residues 13-15 (IGG), D34, 57-58 (IE), and S76 contribute to the S-adenosyl-L-methionine site. C79 is a catalytic residue. Position 376 (S376) interacts with S-adenosyl-L-methionine.

It belongs to the class I-like SAM-binding methyltransferase superfamily. C5-methyltransferase family. In terms of tissue distribution, highly expressed in thymus, testis, and at much lower levels in spleen, lung, brain, heart, kidney, liver, skeletal muscle and embryonic stem cells.

Its subcellular location is the cytoplasm. It catalyses the reaction cytidine(38) in tRNA + S-adenosyl-L-methionine = 5-methylcytidine(38) in tRNA + S-adenosyl-L-homocysteine + H(+). Functionally, specifically methylates cytosine 38 in the anticodon loop of tRNA(Asp). Has higher activity on tRNA(Asp) modified with queuosine at position 34. The polypeptide is tRNA (cytosine(38)-C(5))-methyltransferase (Trdmt1) (Mus musculus (Mouse)).